The primary structure comprises 143 residues: Large ribosomal subunit protein bL28c (143 aa).

A chloroplast-targeting transit peptide spans 1-66 (MTTMATQGAW…SFPGIQPIVA (66 aa)).

The protein belongs to the bacterial ribosomal protein bL28 family. As to quaternary structure, part of the 50S ribosomal subunit.

The protein resides in the plastid. The protein localises to the chloroplast. The protein is Large ribosomal subunit protein bL28c (RPL28) of Arabidopsis thaliana (Mouse-ear cress).